The following is a 37-amino-acid chain: Large ribosomal subunit protein bL36c (37 aa).

This sequence belongs to the bacterial ribosomal protein bL36 family.

It is found in the plastid. Its subcellular location is the chloroplast. The polypeptide is Large ribosomal subunit protein bL36c (Angiopteris evecta (Mule's foot fern)).